A 608-amino-acid polypeptide reads, in one-letter code: Growth hormone receptor (608 aa).

The first 16 residues, 1-16 (MDLRHLLFTLALVCAN), serve as a signal peptide directing secretion. Residues 17–237 (DSLSASDDLL…EFVHCAEEIE (221 aa)) are Extracellular-facing. 2 disulfide bridges follow: cysteine 34/cysteine 44 and cysteine 72/cysteine 83. Asparagine 86 is a glycosylation site (N-linked (GlcNAc...) asparagine). An intrachain disulfide couples cysteine 97 to cysteine 111. The region spanning 122–226 (PPVHLNWTLL…ILYVSFTQAG (105 aa)) is the Fibronectin type-III domain. 3 N-linked (GlcNAc...) asparagine glycosylation sites follow: asparagine 127, asparagine 132, and asparagine 171. The short motif at 211–215 (FGEFS) is the WSXWS motif element. A helical membrane pass occupies residues 238-261 (FPWFLVVVFGVCGLAVTAILILLS). The Cytoplasmic portion of the chain corresponds to 262–608 (KQPRLKMLIF…STDQLNKIMP (347 aa)). Residues 267 to 352 (KMLIFPPVPV…HLKSHSCLGA (86 aa)) form a required for JAK2 binding region. The Box 1 motif motif lies at 270-278 (IFPPVPVPK). A UbE motif motif is present at residues 313–322 (DLWVEFIELD). 2 stretches are compositionally biased toward polar residues: residues 413-426 (ANTDTQQPHTSTQS) and 438-451 (STDSANPSVQTQLS). Residues 413–451 (ANTDTQQPHTSTQSESRESWPPFADSTDSANPSVQTQLS) form a disordered region.

The protein belongs to the type I cytokine receptor family. Type 1 subfamily. In terms of processing, on GH binding, proteolytically cleaved, in vitro, to produce GHBP. As to expression, broad specificity.

It localises to the cell membrane. The protein resides in the secreted. Functionally, receptor for pituitary gland growth hormone (GH1) involved in regulating postnatal body growth. On ligand binding, couples to the JAK2/STAT5 pathway. Its function is as follows. The soluble form (GHBP) acts as a reservoir of growth hormone in plasma and may be a modulator/inhibitor of GH signaling. The sequence is that of Growth hormone receptor (GHR) from Gallus gallus (Chicken).